Reading from the N-terminus, the 393-residue chain is NAD(P)H-quinone oxidoreductase subunit H, chloroplastic (393 aa).

Belongs to the complex I 49 kDa subunit family. In terms of assembly, NDH is composed of at least 16 different subunits, 5 of which are encoded in the nucleus.

Its subcellular location is the plastid. The protein localises to the chloroplast thylakoid membrane. The enzyme catalyses a plastoquinone + NADH + (n+1) H(+)(in) = a plastoquinol + NAD(+) + n H(+)(out). It carries out the reaction a plastoquinone + NADPH + (n+1) H(+)(in) = a plastoquinol + NADP(+) + n H(+)(out). In terms of biological role, NDH shuttles electrons from NAD(P)H:plastoquinone, via FMN and iron-sulfur (Fe-S) centers, to quinones in the photosynthetic chain and possibly in a chloroplast respiratory chain. The immediate electron acceptor for the enzyme in this species is believed to be plastoquinone. Couples the redox reaction to proton translocation, and thus conserves the redox energy in a proton gradient. The polypeptide is NAD(P)H-quinone oxidoreductase subunit H, chloroplastic (Eucalyptus globulus subsp. globulus (Tasmanian blue gum)).